We begin with the raw amino-acid sequence, 458 residues long: UPF0210 protein MmarC6_1246 (458 aa).

Belongs to the UPF0210 family.

The chain is UPF0210 protein MmarC6_1246 from Methanococcus maripaludis (strain C6 / ATCC BAA-1332).